The primary structure comprises 1197 residues: DNA-directed RNA polymerase subunit beta (1197 aa).

A compositionally biased stretch (basic and acidic residues) spans 1172–1185 (KEQEEKKAQQEAEK). Residues 1172 to 1197 (KEQEEKKAQQEAEKAQAASAEDPSAE) are disordered. Residues 1186-1197 (AQAASAEDPSAE) show a composition bias toward low complexity.

It belongs to the RNA polymerase beta chain family. The RNAP catalytic core consists of 2 alpha, 1 beta, 1 beta' and 1 omega subunit. When a sigma factor is associated with the core the holoenzyme is formed, which can initiate transcription.

It carries out the reaction RNA(n) + a ribonucleoside 5'-triphosphate = RNA(n+1) + diphosphate. DNA-dependent RNA polymerase catalyzes the transcription of DNA into RNA using the four ribonucleoside triphosphates as substrates. The polypeptide is DNA-directed RNA polymerase subunit beta (Latilactobacillus sakei subsp. sakei (strain 23K) (Lactobacillus sakei subsp. sakei)).